Consider the following 316-residue polypeptide: RING finger protein 148 (316 aa).

The signal sequence occupies residues methionine 1 to glycine 12. A glycan (N-linked (GlcNAc...) asparagine) is linked at asparagine 56. Positions valine 84 to histidine 178 constitute a PA domain. 2 helical membrane passes run glycine 173–glycine 193 and valine 204–tryptophan 224. An RING-type; atypical zinc finger spans residues cysteine 269–lysine 310.

The protein localises to the membrane. The protein is RING finger protein 148 (Rnf148) of Mus musculus (Mouse).